The primary structure comprises 785 residues: Semaphorin-3F (785 aa).

An N-terminal signal peptide occupies residues 1-18; the sequence is MLVTAFILWASLLTGAWP. The 515-residue stretch at 31-545 folds into the Sema domain; it reads RVRLSFKELK…SAVGVTHLSL (515 aa). N-linked (GlcNAc...) asparagine glycosylation is present at Asn-53. A disulfide bridge links Cys-104 with Cys-115. The N-linked (GlcNAc...) asparagine glycan is linked to Asn-126. 4 cysteine pairs are disulfide-bonded: Cys-133-Cys-142, Cys-300-Cys-412, Cys-324-Cys-372, and Cys-548-Cys-566. Positions 583 to 602 are disordered; the sequence is RSRRQDVRHGNPIRQCRGFN. The Ig-like C2-type domain maps to 605–695; the sequence is ANKNAVESVQ…KHIVTRVQLH (91 aa). A disulfide bridge links Cys-678 with Cys-746. Positions 753-785 are disordered; the sequence is VPPRPREAPGALRPPELQDQKKPRNRRHHPPDT. Residues 775–785 show a composition bias toward basic residues; sequence PRNRRHHPPDT.

Belongs to the semaphorin family. In terms of tissue distribution, expressed ubiquitously in adulthood. During embryogenesis, expressed in subregions of the central nervous system and various other tissues like skin, kidney, lung and intestine.

The protein resides in the secreted. The chain is Semaphorin-3F (Sema3f) from Mus musculus (Mouse).